The chain runs to 116 residues: Phosphoribosyl-AMP cyclohydrolase (116 aa).

Residue Asp-85 coordinates Mg(2+). Cys-86 lines the Zn(2+) pocket. Residues Asp-87 and Asp-89 each contribute to the Mg(2+) site. The Zn(2+) site is built by Cys-102 and Cys-109.

Belongs to the PRA-CH family. Homodimer. It depends on Mg(2+) as a cofactor. The cofactor is Zn(2+).

The protein localises to the cytoplasm. It catalyses the reaction 1-(5-phospho-beta-D-ribosyl)-5'-AMP + H2O = 1-(5-phospho-beta-D-ribosyl)-5-[(5-phospho-beta-D-ribosylamino)methylideneamino]imidazole-4-carboxamide. It functions in the pathway amino-acid biosynthesis; L-histidine biosynthesis; L-histidine from 5-phospho-alpha-D-ribose 1-diphosphate: step 3/9. Functionally, catalyzes the hydrolysis of the adenine ring of phosphoribosyl-AMP. The chain is Phosphoribosyl-AMP cyclohydrolase from Thermobifida fusca (strain YX).